The sequence spans 506 residues: MKEYRVYLERARSRQQDFLYPLIFREYIYGLAYSHNFNRSIFVENGGYDNKYSLLNVKRLITRMYQQNHLIISANDSNKNPFWGYNKNLYSQIISEGFAIVVEIPFFLQLSSSLEEAEIIKSYKNVRSIHSVFPFLEDKFTYLNYVSDIRIPYPIHLEILVQILRYWVKDVPFFHLLRLFLYHFCNWNCFIPTKKSISTFSKSNPRLFLFLYNFYVCEYESIFLFLRNKSYHLRLKSFSVFFERIFFYAKREHLVEVFSKDFSYTLPFFKDPNIHYVRYQGKCILASKNVPFLMNKWKYYFIHLWQCFFDVWSQPRTININQLSEHSFQLLGYFSNVRLNRSVVRSQMLQNTFLIEIVSKKLDIIVPIIPLIRSLAKAKFCNVLGHPISKPVWADSSDFDIIERFLRICRNLSHYYNGSSKKKSLYRIKYILRLSCIKTLACKHKSTVRTFLKRSGSEEFLEEFFTEEEEILSLIFPRDSFTLHRFHRNRIWYLDILFSNDLVNDE.

Belongs to the intron maturase 2 family. MatK subfamily.

It is found in the plastid. The protein resides in the chloroplast. Its function is as follows. Usually encoded in the trnK tRNA gene intron. Probably assists in splicing its own and other chloroplast group II introns. This is Maturase K from Trifolium beckwithii (Beckwith's clover).